Reading from the N-terminus, the 394-residue chain is Phosphopentomutase (394 aa).

The Mn(2+) site is built by Asp13, Asp286, His291, Asp327, His328, and His339.

It belongs to the phosphopentomutase family. It depends on Mn(2+) as a cofactor.

It localises to the cytoplasm. The enzyme catalyses 2-deoxy-alpha-D-ribose 1-phosphate = 2-deoxy-D-ribose 5-phosphate. It carries out the reaction alpha-D-ribose 1-phosphate = D-ribose 5-phosphate. It functions in the pathway carbohydrate degradation; 2-deoxy-D-ribose 1-phosphate degradation; D-glyceraldehyde 3-phosphate and acetaldehyde from 2-deoxy-alpha-D-ribose 1-phosphate: step 1/2. Its function is as follows. Isomerase that catalyzes the conversion of deoxy-ribose 1-phosphate (dRib-1-P) and ribose 1-phosphate (Rib-1-P) to deoxy-ribose 5-phosphate (dRib-5-P) and ribose 5-phosphate (Rib-5-P), respectively. This Bacillus cereus (strain B4264) protein is Phosphopentomutase.